Reading from the N-terminus, the 147-residue chain is Hemoglobin subunit epsilon (147 aa).

The 145-residue stretch at 3 to 147 (HFTAEEKSTI…VATALAHKYH (145 aa)) folds into the Globin domain. Serine 14 and serine 51 each carry phosphoserine. Heme b is bound by residues histidine 64 and histidine 93.

It belongs to the globin family. In terms of assembly, heterotetramer of two alpha chains and two epsilon chains in early embryonic hemoglobin Gower-2; two zeta chains and two epsilon chains in early embryonic hemoglobin Gower-1. Red blood cells.

The epsilon chain is a beta-type chain of early mammalian embryonic hemoglobin. This chain is Hemoglobin subunit epsilon (HBE1), found in Cheirogaleus medius (Fat-tailed dwarf lemur).